We begin with the raw amino-acid sequence, 732 residues long: 1,4-alpha-glucan branching enzyme GlgB 1 (732 aa).

D411 functions as the Nucleophile in the catalytic mechanism. Residue E464 is the Proton donor of the active site.

This sequence belongs to the glycosyl hydrolase 13 family. GlgB subfamily. In terms of assembly, monomer.

The catalysed reaction is Transfers a segment of a (1-&gt;4)-alpha-D-glucan chain to a primary hydroxy group in a similar glucan chain.. It participates in glycan biosynthesis; glycogen biosynthesis. Functionally, catalyzes the formation of the alpha-1,6-glucosidic linkages in glycogen by scission of a 1,4-alpha-linked oligosaccharide from growing alpha-1,4-glucan chains and the subsequent attachment of the oligosaccharide to the alpha-1,6 position. In Xanthomonas euvesicatoria pv. vesicatoria (strain 85-10) (Xanthomonas campestris pv. vesicatoria), this protein is 1,4-alpha-glucan branching enzyme GlgB 1.